Consider the following 445-residue polypeptide: Protein trichome berefringence-like 7 (445 aa).

The chain crosses the membrane as a helical; Signal-anchor for type II membrane protein span at residues 69–89 (IIAGTIVSFLVIIAGGYLYVV). The short motif at 188 to 190 (GDS) is the GDS motif element. A DCXHWCLPGXXDXWN motif motif is present at residues 418-432 (DCSHWCLPGVPDIWN).

The protein belongs to the PC-esterase family. TBL subfamily.

The protein localises to the membrane. Functionally, may act as a bridging protein that binds pectin and other cell wall polysaccharides. Probably involved in maintaining esterification of pectins. May be involved in the specific O-acetylation of cell wall polymers. This Arabidopsis thaliana (Mouse-ear cress) protein is Protein trichome berefringence-like 7 (TBL7).